A 375-amino-acid polypeptide reads, in one-letter code: Queuine tRNA-ribosyltransferase (375 aa).

The active-site Proton acceptor is Asp93. Residues 93-97 (DSGGF), Asp147, Gln191, and Gly218 contribute to the substrate site. The interval 249–255 (GVGTPLD) is RNA binding. The active-site Nucleophile is the Asp268. The RNA binding; important for wobble base 34 recognition stretch occupies residues 273–277 (TRNAR). Residues Cys306, Cys308, Cys311, and His337 each contribute to the Zn(2+) site.

The protein belongs to the queuine tRNA-ribosyltransferase family. As to quaternary structure, homodimer. Within each dimer, one monomer is responsible for RNA recognition and catalysis, while the other monomer binds to the replacement base PreQ1. Zn(2+) is required as a cofactor.

It carries out the reaction 7-aminomethyl-7-carbaguanine + guanosine(34) in tRNA = 7-aminomethyl-7-carbaguanosine(34) in tRNA + guanine. Its pathway is tRNA modification; tRNA-queuosine biosynthesis. In terms of biological role, catalyzes the base-exchange of a guanine (G) residue with the queuine precursor 7-aminomethyl-7-deazaguanine (PreQ1) at position 34 (anticodon wobble position) in tRNAs with GU(N) anticodons (tRNA-Asp, -Asn, -His and -Tyr). Catalysis occurs through a double-displacement mechanism. The nucleophile active site attacks the C1' of nucleotide 34 to detach the guanine base from the RNA, forming a covalent enzyme-RNA intermediate. The proton acceptor active site deprotonates the incoming PreQ1, allowing a nucleophilic attack on the C1' of the ribose to form the product. After dissociation, two additional enzymatic reactions on the tRNA convert PreQ1 to queuine (Q), resulting in the hypermodified nucleoside queuosine (7-(((4,5-cis-dihydroxy-2-cyclopenten-1-yl)amino)methyl)-7-deazaguanosine). The chain is Queuine tRNA-ribosyltransferase from Nitratidesulfovibrio vulgaris (strain DP4) (Desulfovibrio vulgaris).